The primary structure comprises 382 residues: Glutamine synthetase cytosolic isozyme (382 aa).

Residues 36-118 (GKICAEYVWI…VMCDCYEPPK (83 aa)) form the GS beta-grasp domain. The 248-residue stretch at 135–382 (TRFACAEVME…RLIVETTILL (248 aa)) folds into the GS catalytic domain.

It belongs to the glutamine synthetase family. As to quaternary structure, homooctamer.

Its subcellular location is the cytoplasm. The catalysed reaction is L-glutamate + NH4(+) + ATP = L-glutamine + ADP + phosphate + H(+). This is Glutamine synthetase cytosolic isozyme (GLN1) from Chlamydomonas reinhardtii (Chlamydomonas smithii).